A 132-amino-acid chain; its full sequence is Agouti-signaling protein (132 aa).

The N-terminal stretch at 1 to 22 (MDVTRLLLATLLVFLCFFTANS) is a signal peptide. The N-linked (GlcNAc...) asparagine glycan is linked to N39. Residues 62-85 (IGRKAAEKKRSSKKEASMKKVVRP) form a disordered region. Over residues 65-79 (KAAEKKRSSKKEASM) the composition is skewed to basic and acidic residues. 5 disulfide bridges follow: C93–C108, C100–C114, C107–C125, C111–C132, and C116–C123. Residues 93–132 (CVATRNSCKPPAPACCDPCASCQCRFFRSACSCRVLSLNC) form the Agouti domain.

In terms of tissue distribution, widely expressed at low levels. Highly expressed in the skin. Expressed in adipose tissue.

The protein resides in the secreted. In terms of biological role, involved in the regulation of melanogenesis. The binding of ASP to MC1R precludes alpha-MSH initiated signaling and thus blocks production of cAMP, leading to a down-regulation of eumelanogenesis (brown/black pigment) and thus increasing synthesis of pheomelanin (yellow/red pigment). In higher primates, agouti may affect the quality of hair pigmentation rather than its pattern of deposition. Could well play a role in neuroendocrine aspects of melanocortin action. May have some functional role in regulating the lipid metabolism with adipocytes. The polypeptide is Agouti-signaling protein (ASIP) (Homo sapiens (Human)).